Consider the following 130-residue polypeptide: Small ribosomal subunit protein uS9 (130 aa).

This sequence belongs to the universal ribosomal protein uS9 family.

The chain is Small ribosomal subunit protein uS9 from Oceanobacillus iheyensis (strain DSM 14371 / CIP 107618 / JCM 11309 / KCTC 3954 / HTE831).